Reading from the N-terminus, the 411-residue chain is LL-diaminopimelate aminotransferase (411 aa).

Substrate-binding residues include Y15 and G42. Residues Y72, 108–109 (AK), Y132, N187, Y218, and 246–248 (SFS) each bind pyridoxal 5'-phosphate. Substrate-binding residues include K109, Y132, and N187. An N6-(pyridoxal phosphate)lysine modification is found at K249. 2 residues coordinate pyridoxal 5'-phosphate: R257 and N292. Residues N292 and R388 each coordinate substrate.

It belongs to the class-I pyridoxal-phosphate-dependent aminotransferase family. LL-diaminopimelate aminotransferase subfamily. Homodimer. The cofactor is pyridoxal 5'-phosphate.

It catalyses the reaction (2S,6S)-2,6-diaminopimelate + 2-oxoglutarate = (S)-2,3,4,5-tetrahydrodipicolinate + L-glutamate + H2O + H(+). The protein operates within amino-acid biosynthesis; L-lysine biosynthesis via DAP pathway; LL-2,6-diaminopimelate from (S)-tetrahydrodipicolinate (aminotransferase route): step 1/1. Its function is as follows. Involved in the synthesis of meso-diaminopimelate (m-DAP or DL-DAP), required for both lysine and peptidoglycan biosynthesis. Catalyzes the direct conversion of tetrahydrodipicolinate to LL-diaminopimelate. In Rippkaea orientalis (strain PCC 8801 / RF-1) (Cyanothece sp. (strain PCC 8801)), this protein is LL-diaminopimelate aminotransferase.